A 230-amino-acid polypeptide reads, in one-letter code: Broad-specificity phosphatase YOR283W (230 aa).

The active-site Tele-phosphohistidine intermediate is His24. Residues Gln36–Gly37 and Glu102–Met105 each bind substrate. Glu102 (proton donor/acceptor) is an active-site residue.

Belongs to the phosphoglycerate mutase family. BPG-dependent PGAM subfamily.

It localises to the cytoplasm. The protein resides in the nucleus. Its function is as follows. Metal-independent phosphatase active against a broad range of phosphorylated substrates including nucleoside tri- and diphosphates, phosphorylated organic acids, and amino acids. Shows no activity against phytic acid, phosphorylated carbohydrates, and nucleoside monophosphates. This is Broad-specificity phosphatase YOR283W from Saccharomyces cerevisiae (strain ATCC 204508 / S288c) (Baker's yeast).